Reading from the N-terminus, the 169-residue chain is Putative outer membrane protein BBA03 (169 aa).

It is found in the cell outer membrane. The protein is Putative outer membrane protein BBA03 of Borreliella burgdorferi (strain ATCC 35210 / DSM 4680 / CIP 102532 / B31) (Borrelia burgdorferi).